We begin with the raw amino-acid sequence, 664 residues long: Degenerin del-1 (664 aa).

Residues 1–67 are Cytoplasmic-facing; the sequence is MARKYIDILK…IFTTSLYWVR (67 aa). A helical transmembrane segment spans residues 68–88; the sequence is FLWVVVSLVCICLCMYSFSHV. Residues 89–607 lie on the Extracellular side of the membrane; that stretch reads KDKYDRKEKI…WFNLMADMGG (519 aa). 5 N-linked (GlcNAc...) asparagine glycosylation sites follow: N241, N300, N394, N508, and N562. A helical membrane pass occupies residues 608–628; that stretch reads QAGLFLGASIMSVIEFLFFAV. Over 629–664 the chain is Cytoplasmic; that stretch reads RTLGIACKPRRWRQKTELLRAEELNDAEKGVSTNNN.

This sequence belongs to the amiloride-sensitive sodium channel (TC 1.A.6) family.

It localises to the membrane. Functionally, probable sodium channel subunit. The sequence is that of Degenerin del-1 (del-1) from Caenorhabditis elegans.